An 803-amino-acid polypeptide reads, in one-letter code: MNDMNLSPVGMEQLSSSSVSNALPVSGSHLGLAASPSHSAIPAPGLPVAIPNLGPSLSSLPSALSLMLPVGIGDRGVMCGLPERNYTLPPPPYPHLESSYFRTILPGILSYLADRPPPQYIHPNSINVDGNTALSITNNPSALDPYQANGNVGLELGIVSIDSRSVNTHGAQSLHPNDGHEVALDTTITMENVSRVTSPISTDGMAEELTMDGVTGEHPQIPNGSRSHEPLSVDSVSNSLTAEAVGHGGVIPIHGNGLELPVVMETDHIANRVNGMSDSTLSDSIHTVAMSTNSVSVALSTSHNLASLESVSLHEVGLSLEPVAVSSITQEVAMGTGHVDVSSDSLSFVPSSLQMEDSNSNKENMATLFTIWCTLCDRAYPSDCPDHGPVTFVPDTPIESRARLSLPKQLVLRQSIVGTDVVGVLPLIGVWTAETIPVRTCFGPLIGQQSHSLEVAEWTDKAVNHVWKIYHTGVLEFCIITTDENECNWMMFVRKARNREEQNLVAYPHDGKIYFCTSQDIPPESELLFYYSRNYAQQIGVPEHPDVHLCNCGKECSSYSEFKAHLTSHIHNHLPSQGHSSSHGPSHSKERKWKCSMCPQAFISPSKLHVHFMGHMGMKPHKCDFCSKAFSDPSNLRTHLKIHTGQKNYRCTLCDKSFTQKAHLESHMVIHTGEKNLKCDYCDKLFMRRQDLKQHVLIHTQERQIKCPKCDKLFLRTNHLKKHLNSHEGKRDYVCEKCTKAYLTKYHLTRHLKTCKEPSSSSSAQEEEDDESEEEDLADSMRTEDCRMGSAVYSTDESLSAHK.

Residues 408–532 (KQLVLRQSIV…PESELLFYYS (125 aa)) enclose the SET domain. C2H2-type zinc fingers lie at residues 593 to 615 (WKCSMCPQAFISPSKLHVHFMGH), 621 to 643 (HKCDFCSKAFSDPSNLRTHLKIH), 649 to 671 (YRCTLCDKSFTQKAHLESHMVIH), 677 to 699 (LKCDYCDKLFMRRQDLKQHVLIH), and 705 to 727 (IKCPKCDKLFLRTNHLKKHLNSH). The segment at 733-755 (YVCEKCTKAYLTKYHLTRHLKTC) adopts a C2H2-type 6; degenerate zinc-finger fold. The tract at residues 757–803 (EPSSSSSAQEEEDDESEEEDLADSMRTEDCRMGSAVYSTDESLSAHK) is disordered. Over residues 765–778 (QEEEDDESEEEDLA) the composition is skewed to acidic residues. Positions 792 to 803 (VYSTDESLSAHK) are enriched in polar residues.

This sequence belongs to the class V-like SAM-binding methyltransferase superfamily.

It localises to the nucleus. Functionally, may function as a transcription factor involved in cell differentiation. This chain is PR domain zinc finger protein 4 (Prdm4), found in Mus musculus (Mouse).